The chain runs to 474 residues: MSYPQGYLYQPSASLALYSCPAYSTTVISGPRTDELGRSPSGSAFSPYAGSTAFTASSAGFSSPLQYSGDPAAAFTSYVGSPYDHSAGMAGSLEYHPYAAPLGIYAYGDPAYRKNASRDATATLKAWLNEHRKNPYPTKGEKIMLAIITKMTLTQVSTWFANARRRLKKENKMTWTPRNRSEDEDDDENIDLEKNEEDDPSKLEENGNQDGDAGDQKRSPDGVDFVRLEGEVHLGKELDQTRNNSELNELDERNGHLSNSSSPPTPPLCPPDQSPQAQEDQNLHGHTHQSIQQLLHHSNQPHPLDLVNRNTSVQHGPVTNNATSVIHSPPASTSKPKLWSLAEIATSSDKVKERSNAAEVAGTTAAKSMVVSASSPSRSPSAQCHFPNNTVLSRPLYYSIPFYPGYTNYGTFSHLHSHHGPSSSVNSTYHFNGINQPVLNKAEGLAKECKHISQSQDDLNKGTPYEMKKGMSSI.

The homeobox; TALE-type DNA-binding region spans 109–171; sequence DPAYRKNASR…NARRRLKKEN (63 aa). Disordered regions lie at residues 174–222, 252–294, and 453–474; these read TWTP…SPDG, ERNG…IQQL, and SQSQ…MSSI. Positions 182–199 are enriched in acidic residues; sequence EDEDDDENIDLEKNEEDD. Residues 263–273 are compositionally biased toward pro residues; that stretch reads PPTPPLCPPDQ.

This sequence belongs to the TALE/IRO homeobox family. In terms of tissue distribution, early in gastrulation, expressed in cells beneath the blastopore lip. Subsequently expressed in the neural plate in overlapping patterns with other irx members, which all share an anterior border of expression. At the time of neural tube closure (stage 19) in regions of the midbrain, hindbrain, neural tube and optic vesicle, where expression continues during tailbud stages. In stage 34, expressed throughout the eye retina. Does not appear to be expressed in the developing heart or pronephros.

The protein resides in the nucleus. Acts partially redundantly with other irx members in neural patterning. Required for formation of the posterior forebrain, midbrain, hindbrain, and to a lesser extent, spinal cord. Patterns the neuroectoderm in both the anterior/posterior and dorsal/ventral axes. Does not appear to play a role in pronephros kidney development. Involved in craniofacial and gonadal development. Modulates the migration of progenitor cell populations in branchial arches and gonads by repressing CXCL12. This chain is Iroquois-class homeodomain protein irx-5 (irx5), found in Xenopus laevis (African clawed frog).